The sequence spans 501 residues: ATP synthase subunit alpha (501 aa).

ATP is bound at residue 169–176; sequence GDRQTGKT.

Belongs to the ATPase alpha/beta chains family. As to quaternary structure, F-type ATPases have 2 components, CF(1) - the catalytic core - and CF(0) - the membrane proton channel. CF(1) has five subunits: alpha(3), beta(3), gamma(1), delta(1), epsilon(1). CF(0) has three main subunits: a(1), b(2) and c(9-12). The alpha and beta chains form an alternating ring which encloses part of the gamma chain. CF(1) is attached to CF(0) by a central stalk formed by the gamma and epsilon chains, while a peripheral stalk is formed by the delta and b chains.

It is found in the cell membrane. It catalyses the reaction ATP + H2O + 4 H(+)(in) = ADP + phosphate + 5 H(+)(out). Produces ATP from ADP in the presence of a proton gradient across the membrane. The alpha chain is a regulatory subunit. The sequence is that of ATP synthase subunit alpha from Streptococcus agalactiae serotype III (strain NEM316).